The sequence spans 445 residues: Tubby-like F-box protein 8 (445 aa).

One can recognise an F-box domain in the interval 56–102 (ESRWASLPPELLRDVIRRLEASESTWPSRKDVVSCAAVCKAWREMCK).

It belongs to the TUB family. In terms of tissue distribution, ubiquitous.

The polypeptide is Tubby-like F-box protein 8 (TULP8) (Oryza sativa subsp. japonica (Rice)).